The following is a 141-amino-acid chain: ATP synthase epsilon chain (141 aa).

It belongs to the ATPase epsilon chain family. In terms of assembly, F-type ATPases have 2 components, CF(1) - the catalytic core - and CF(0) - the membrane proton channel. CF(1) has five subunits: alpha(3), beta(3), gamma(1), delta(1), epsilon(1). CF(0) has three main subunits: a, b and c.

Its subcellular location is the cell membrane. In terms of biological role, produces ATP from ADP in the presence of a proton gradient across the membrane. The chain is ATP synthase epsilon chain (atpC) from Mycoplasmopsis pulmonis (strain UAB CTIP) (Mycoplasma pulmonis).